The chain runs to 290 residues: Zinc finger protein-like 1 homolog (290 aa).

The B box-type; degenerate zinc-finger motif lies at 1 to 43; the sequence is MGLCKCPKRQVTTQFCFEHRVNVCENCMVVNHTKCTVQSYIQW. The RING-type; atypical zinc finger occupies 53 to 101; that stretch reads CPLCGSPLDNEDCVRLICYHVFHWKCLNAKQQSLPANTAPGGHTCPTCS. Residues 156 to 168 are compositionally biased toward polar residues; the sequence is NGNTFASSMSQTR. The segment at 156–175 is disordered; it reads NGNTFASSMSQTRSNERPES. A helical transmembrane segment spans residues 249–269; it reads WFLVLGGCIGFVCIIYVLATL.

The protein belongs to the ZFPL1 family.

It is found in the membrane. This chain is Zinc finger protein-like 1 homolog, found in Aedes aegypti (Yellowfever mosquito).